We begin with the raw amino-acid sequence, 184 residues long: Large ribosomal subunit protein uL6 (184 aa).

The protein belongs to the universal ribosomal protein uL6 family. Part of the 50S ribosomal subunit.

This protein binds to the 23S rRNA, and is important in its secondary structure. It is located near the subunit interface in the base of the L7/L12 stalk, and near the tRNA binding site of the peptidyltransferase center. This chain is Large ribosomal subunit protein uL6, found in Salinibacter ruber (strain DSM 13855 / M31).